The primary structure comprises 243 residues: uncharacterized protein (243 aa).

[4Fe-4S] cluster is bound by residues C120 and C157.

As to quaternary structure, homodimer. The cofactor is [4Fe-4S] cluster.

This is an uncharacterized protein from Methanocaldococcus jannaschii (strain ATCC 43067 / DSM 2661 / JAL-1 / JCM 10045 / NBRC 100440) (Methanococcus jannaschii).